A 314-amino-acid chain; its full sequence is DNA-directed RNA polymerase subunit alpha (314 aa).

An alpha N-terminal domain (alpha-NTD) region spans residues 1-228; that stretch reads MAQFHYECVE…SLFEPLKDIT (228 aa). The segment at 240 to 314 is alpha C-terminal domain (alpha-CTD); sequence DPTSQIPIEE…LPQEKVAKAT (75 aa).

It belongs to the RNA polymerase alpha chain family. In cyanobacteria the RNAP catalytic core is composed of 2 alpha, 1 beta, 1 beta', 1 gamma and 1 omega subunit. When a sigma factor is associated with the core the holoenzyme is formed, which can initiate transcription.

The catalysed reaction is RNA(n) + a ribonucleoside 5'-triphosphate = RNA(n+1) + diphosphate. DNA-dependent RNA polymerase catalyzes the transcription of DNA into RNA using the four ribonucleoside triphosphates as substrates. This chain is DNA-directed RNA polymerase subunit alpha, found in Trichodesmium erythraeum (strain IMS101).